Reading from the N-terminus, the 422-residue chain is MTVKTTVSSKDIDEAYLQLKDIVKETPLQKDHYLSQKYDCKVYLKREDLQWVRSFKLRGAYNAIIALDEADRQNGITCASAGNHAQGVAYTASKLNLNAVIFMPVTTPLQKINQVKFFGGDNTEVVLTGDTFDDCLKEALVYTEENKMNFIDPFNNIYTIAGQGTLAKEILEQSKDNDIQFDYLFAAIGGGGLISGVGTYFKTHSPETSIIGVEPAGAASMYTSVVLENQLVTLPDIDKFVDGASVARVGQITFDISKDIVDDYIQVHEGAVCSTILDMYSKQAIIAEPAGALSIAALDQYQAEIKGKTVVCVVSGGNNDINRMKEIEERSLLFEEMKHYFILNFPQRPGALREFVNEVLGPKDDITKFEYLKKSSQNTGTVIIGIQLNNHKDLGHLKANVDEFDKSNIYINENKMLYSLLI.

Position 56 is an N6-(pyridoxal phosphate)lysine (Lys56). Pyridoxal 5'-phosphate-binding positions include Asn83, 189-193 (GGGGL), and Ser315. An ACT-like domain is found at 339–413 (HYFILNFPQR…FDKSNIYINE (75 aa)).

The protein belongs to the serine/threonine dehydratase family. Homotetramer. Pyridoxal 5'-phosphate is required as a cofactor.

The catalysed reaction is L-threonine = 2-oxobutanoate + NH4(+). It functions in the pathway amino-acid biosynthesis; L-isoleucine biosynthesis; 2-oxobutanoate from L-threonine: step 1/1. Functionally, catalyzes the anaerobic formation of alpha-ketobutyrate and ammonia from threonine in a two-step reaction. The first step involved a dehydration of threonine and a production of enamine intermediates (aminocrotonate), which tautomerizes to its imine form (iminobutyrate). Both intermediates are unstable and short-lived. The second step is the nonenzymatic hydrolysis of the enamine/imine intermediates to form 2-ketobutyrate and free ammonia. In the low water environment of the cell, the second step is accelerated by RidA. In Staphylococcus saprophyticus subsp. saprophyticus (strain ATCC 15305 / DSM 20229 / NCIMB 8711 / NCTC 7292 / S-41), this protein is L-threonine dehydratase biosynthetic IlvA (ilvA).